The primary structure comprises 434 residues: UDP-N-acetylglucosamine 1-carboxyvinyltransferase 1 (434 aa).

22-23 contributes to the phosphoenolpyruvate binding site; sequence KN. Arginine 93 contacts UDP-N-acetyl-alpha-D-glucosamine. Catalysis depends on cysteine 117, which acts as the Proton donor. Cysteine 117 carries the 2-(S-cysteinyl)pyruvic acid O-phosphothioketal modification. Residues 122–126, aspartate 306, and valine 328 contribute to the UDP-N-acetyl-alpha-D-glucosamine site; that span reads RPIDQ.

It belongs to the EPSP synthase family. MurA subfamily.

The protein localises to the cytoplasm. The catalysed reaction is phosphoenolpyruvate + UDP-N-acetyl-alpha-D-glucosamine = UDP-N-acetyl-3-O-(1-carboxyvinyl)-alpha-D-glucosamine + phosphate. It functions in the pathway cell wall biogenesis; peptidoglycan biosynthesis. Functionally, cell wall formation. Adds enolpyruvyl to UDP-N-acetylglucosamine. This is UDP-N-acetylglucosamine 1-carboxyvinyltransferase 1 from Bacillus anthracis.